The following is a 171-amino-acid chain: Lipoprotein signal peptidase (171 aa).

The next 3 helical transmembrane spans lie at 12–32 (WYWV…WVLA), 67–87 (WQRW…TVWL), and 93–113 (SLLK…GNLV). Residues Asp123 and Asp141 contribute to the active site. A helical transmembrane segment spans residues 137–157 (FNIADSAICIGAVLIIWDAFL).

Belongs to the peptidase A8 family.

Its subcellular location is the cell inner membrane. It catalyses the reaction Release of signal peptides from bacterial membrane prolipoproteins. Hydrolyzes -Xaa-Yaa-Zaa-|-(S,diacylglyceryl)Cys-, in which Xaa is hydrophobic (preferably Leu), and Yaa (Ala or Ser) and Zaa (Gly or Ala) have small, neutral side chains.. The protein operates within protein modification; lipoprotein biosynthesis (signal peptide cleavage). In terms of biological role, this protein specifically catalyzes the removal of signal peptides from prolipoproteins. This chain is Lipoprotein signal peptidase, found in Shewanella baltica (strain OS195).